Consider the following 273-residue polypeptide: Type III pantothenate kinase (273 aa).

Residue 5 to 12 (DVGNSHVV) participates in ATP binding. 112-115 (GTDL) contacts substrate. The active-site Proton acceptor is Asp114. K(+) is bound at residue Asp134. An ATP-binding site is contributed by Thr137. Thr189 is a binding site for substrate.

It belongs to the type III pantothenate kinase family. In terms of assembly, homodimer. NH4(+) serves as cofactor. It depends on K(+) as a cofactor.

The protein localises to the cytoplasm. The catalysed reaction is (R)-pantothenate + ATP = (R)-4'-phosphopantothenate + ADP + H(+). The protein operates within cofactor biosynthesis; coenzyme A biosynthesis; CoA from (R)-pantothenate: step 1/5. In terms of biological role, catalyzes the phosphorylation of pantothenate (Pan), the first step in CoA biosynthesis. This chain is Type III pantothenate kinase, found in Treponema pallidum (strain Nichols).